The chain runs to 504 residues: MTVRVRVAPSPTGDPHVGTAYMSLFNLAFARRHGGAFVLRIEDTDRSRYVADSEQQIFDSLRWLGLDWDEGPDKGGPYGPYRQSERLDTYRPYVDQLLASGHAYYCWCSPERLAAMREEQQRRRQPPGYDRLCYGKTREERARLGGFSERPVVRMLIPDDVPLTFPDLIRGQVSAPRPDDQVILKADGFPTYHFAVVVDDHLMAITHVVRGEEWISSTPKHLLLYDWLGWPRPQFAHMPLLRNPDKSKISKRKNPAARLLWFKEQGYLPEALRNFLALMGYSMPDGREVFSFDEMVAEFDWSRVNPVGPVFDVTKLDWLNGHYIRSLPVDDLAERLIPYLQEARLIGTPVTPREDALLRAAAPLVQERIAHLTEAAELLAFLLRPEEEFGIEPDAAQRVLGRDAAASLRAAIDALEPLADWTASAIHAALQAALVDGLGLKPRHAFTPVRVAITGRTVSPPLFESMELLGRDRSLARLRRAAAIADAGGADSAGVGPGSAVRTD.

The 'HIGH' region signature appears at 9 to 19 (PSPTGDPHVGT). The short motif at 248–252 (KISKR) is the 'KMSKS' region element. Lysine 251 provides a ligand contact to ATP.

The protein belongs to the class-I aminoacyl-tRNA synthetase family. Glutamate--tRNA ligase type 1 subfamily. As to quaternary structure, monomer.

It is found in the cytoplasm. The enzyme catalyses tRNA(Glu) + L-glutamate + ATP = L-glutamyl-tRNA(Glu) + AMP + diphosphate. Functionally, catalyzes the attachment of glutamate to tRNA(Glu) in a two-step reaction: glutamate is first activated by ATP to form Glu-AMP and then transferred to the acceptor end of tRNA(Glu). The sequence is that of Glutamate--tRNA ligase from Acidothermus cellulolyticus (strain ATCC 43068 / DSM 8971 / 11B).